The sequence spans 187 residues: Threonylcarbamoyl-AMP synthase (187 aa).

Residues 4-187 (TLDLDRAVAA…DARSGQILRD (184 aa)) enclose the YrdC-like domain.

It belongs to the SUA5 family. TsaC subfamily.

The protein localises to the cytoplasm. It carries out the reaction L-threonine + hydrogencarbonate + ATP = L-threonylcarbamoyladenylate + diphosphate + H2O. In terms of biological role, required for the formation of a threonylcarbamoyl group on adenosine at position 37 (t(6)A37) in tRNAs that read codons beginning with adenine. Catalyzes the conversion of L-threonine, HCO(3)(-)/CO(2) and ATP to give threonylcarbamoyl-AMP (TC-AMP) as the acyladenylate intermediate, with the release of diphosphate. The chain is Threonylcarbamoyl-AMP synthase from Xanthomonas axonopodis pv. citri (strain 306).